A 368-amino-acid polypeptide reads, in one-letter code: Galanin receptor type 3 (368 aa).

Residues 1–20 (MADAQNISLDSPGSVGAVAV) are Extracellular-facing. The N-linked (GlcNAc...) asparagine glycan is linked to N6. The helical transmembrane segment at 21–41 (PVVFALIFLLGTVGNGLVLAV) threads the bilayer. The Cytoplasmic segment spans residues 42–57 (LLQPGPSAWQEPGSTT). The helical transmembrane segment at 58–78 (DLFILNLAVADLCFILCCVPF) threads the bilayer. Topologically, residues 79-96 (QATIYTLDAWLFGALVCK) are extracellular. A disulfide bond links C95 and C172. The chain crosses the membrane as a helical span at residues 97-118 (AVHLLIYLTMYASSFTLAAVSV). Residues 119 to 138 (DRYLAVRHPLRSRALRTPRN) lie on the Cytoplasmic side of the membrane. Residues 139–159 (ARAAVGLVWLLAALFSAPYLS) form a helical membrane-spanning segment. Residues 160–184 (YYGTVRYGALELCVPAWEDARRRAL) lie on the Extracellular side of the membrane. Residues 185–205 (DVATFAAGYLLPVAVVSLAYG) form a helical membrane-spanning segment. Residues 206–236 (RTLRFLWAAVGPAGAAAAEARRRATGRAGRA) lie on the Cytoplasmic side of the membrane. A helical transmembrane segment spans residues 237-257 (MLAVAALYALCWGPHHALILC). Topologically, residues 258 to 259 (FW) are extracellular. A helical transmembrane segment spans residues 260–280 (YGRFAFSPATYACRLASHCLA). At 281–368 (YANSCLNPLV…HGGEAARGPE (88 aa)) the chain is on the cytoplasmic side. C308 carries the S-palmitoyl cysteine lipid modification. The tract at residues 317 to 368 (RRALRRVRPASSGPPGCPGDARPSGRLLAGGGQGPEPREGPVHGGEAARGPE) is disordered.

It belongs to the G-protein coupled receptor 1 family.

The protein localises to the cell membrane. In terms of biological role, receptor for the hormone galanin. Receptor for the hormone spexin-1. This is Galanin receptor type 3 (GALR3) from Homo sapiens (Human).